The following is a 292-amino-acid chain: tRNA pseudouridine synthase B (292 aa).

The active-site Nucleophile is the Asp-38.

It belongs to the pseudouridine synthase TruB family. Type 1 subfamily.

The catalysed reaction is uridine(55) in tRNA = pseudouridine(55) in tRNA. In terms of biological role, responsible for synthesis of pseudouridine from uracil-55 in the psi GC loop of transfer RNAs. The protein is tRNA pseudouridine synthase B of Streptococcus gordonii (strain Challis / ATCC 35105 / BCRC 15272 / CH1 / DL1 / V288).